The primary structure comprises 501 residues: Glycerol kinase (501 aa).

Threonine 16 is a binding site for ADP. ATP contacts are provided by threonine 16, threonine 17, and serine 18. Threonine 16 provides a ligand contact to sn-glycerol 3-phosphate. Arginine 20 contacts ADP. Sn-glycerol 3-phosphate is bound by residues arginine 84, glutamate 85, tyrosine 135, and aspartate 242. 5 residues coordinate glycerol: arginine 84, glutamate 85, tyrosine 135, aspartate 242, and glutamine 243. The ADP site is built by threonine 264 and glycine 307. Threonine 264, glycine 307, glutamine 311, and glycine 408 together coordinate ATP. An ADP-binding site is contributed by glycine 408.

Belongs to the FGGY kinase family.

The enzyme catalyses glycerol + ATP = sn-glycerol 3-phosphate + ADP + H(+). The protein operates within polyol metabolism; glycerol degradation via glycerol kinase pathway; sn-glycerol 3-phosphate from glycerol: step 1/1. Its function is as follows. Key enzyme in the regulation of glycerol uptake and metabolism. Catalyzes the phosphorylation of glycerol to yield sn-glycerol 3-phosphate. In Saccharolobus islandicus (strain L.S.2.15 / Lassen #1) (Sulfolobus islandicus), this protein is Glycerol kinase.